A 223-amino-acid chain; its full sequence is RNA-free ribonuclease P (223 aa).

It belongs to the HARP family.

The catalysed reaction is Endonucleolytic cleavage of RNA, removing 5'-extranucleotides from tRNA precursor.. Its function is as follows. RNA-free RNase P that catalyzes the removal of the 5'-leader sequence from pre-tRNA to produce the mature 5'-terminus. This Methanococcus maripaludis (strain C6 / ATCC BAA-1332) protein is RNA-free ribonuclease P.